We begin with the raw amino-acid sequence, 633 residues long: Heterogeneous nuclear ribonucleoprotein R (633 aa).

The tract at residues 1–24 is disordered; sequence MANQVNGNAVQLKEEEEPMDTSSV. Ala2 carries the N-acetylalanine modification. Glycyl lysine isopeptide (Lys-Gly) (interchain with G-Cter in SUMO2) cross-links involve residues Lys13 and Lys171. RRM domains are found at residues 165–244, 246–328, and 341–411; these read TEVF…ISVA, NRLF…WADP, and KVLF…LAKP. Lys359 is covalently cross-linked (Glycyl lysine isopeptide (Lys-Gly) (interchain with G-Cter in SUMO2)). The residue at position 366 (Lys366) is an N6-acetyllysine. The short motif at 412 to 418 is the Nuclear localization signal element; sequence PDKKRKE. The segment at 412 to 456 is disordered; it reads PDKKRKERQAARQASRSTAYEDYYYHPPPRMPPPIRGRGRGGGRG. The segment covering 437 to 446 has biased composition (pro residues); sequence HPPPRMPPPI. An RNA-binding RGG-box region spans residues 447–567; the sequence is RGRGRGGGRG…SRGSRGNRGG (121 aa). The stretch at 462–471 is one 1; approximate repeat; sequence PDYYGYEDYY. Residues 462–497 are 3 X 11 AA approximate repeats of D-D-Y-Y-G-Y-D-Y-H-D-Y; it reads PDYYGYEDYYDDYYGYDYHDYRGGYEDPYYGYDDGY. Residues 472–482 form repeat 2; that stretch reads DDYYGYDYHDY. Residues 488 to 497 form a 3; approximate repeat; it reads DPYYGYDDGY. The span at 501-510 shows a compositional bias: gly residues; that stretch reads GRGGGRGGRG. Residues 501 to 633 are disordered; sequence GRGGGRGGRG…YQDTYGQQWK (133 aa). Over residues 511–524 the composition is skewed to pro residues; the sequence is APPPPRGRGAPPPR. A compositionally biased stretch (low complexity) spans 525–541; that stretch reads GRAGYSQRGAPLGPPRG. A compositionally biased stretch (gly residues) spans 558–570; the sequence is SRGSRGNRGGNVG. The segment covering 588–604 has biased composition (polar residues); that stretch reads TNNQQNWGSQPIAQQPL. Residues 605–621 show a composition bias toward low complexity; that stretch reads QQGGDYSGNYGYNNDNQ. The span at 622–633 shows a compositional bias: polar residues; the sequence is EFYQDTYGQQWK.

Identified in the spliceosome C complex. Identified in a IGF2BP1-dependent mRNP granule complex containing untranslated mRNAs. Interacts with GTPBP1.

The protein localises to the nucleus. The protein resides in the microsome. Its subcellular location is the nucleoplasm. It localises to the cytoplasm. Its function is as follows. Component of ribonucleosomes, which are complexes of at least 20 other different heterogeneous nuclear ribonucleoproteins (hnRNP). hnRNP play an important role in processing of precursor mRNA in the nucleus. This Homo sapiens (Human) protein is Heterogeneous nuclear ribonucleoprotein R (HNRNPR).